The following is a 545-amino-acid chain: Chaperonin GroEL 1 (545 aa).

Residues 30 to 33, Lys-51, 87 to 91, Gly-415, and Asp-496 contribute to the ATP site; these read TLGP and DGTTT.

This sequence belongs to the chaperonin (HSP60) family. Forms a cylinder of 14 subunits composed of two heptameric rings stacked back-to-back. Interacts with the co-chaperonin GroES.

Its subcellular location is the cytoplasm. The catalysed reaction is ATP + H2O + a folded polypeptide = ADP + phosphate + an unfolded polypeptide.. Together with its co-chaperonin GroES, plays an essential role in assisting protein folding. The GroEL-GroES system forms a nano-cage that allows encapsulation of the non-native substrate proteins and provides a physical environment optimized to promote and accelerate protein folding. The chain is Chaperonin GroEL 1 from Nitrobacter hamburgensis (strain DSM 10229 / NCIMB 13809 / X14).